The chain runs to 341 residues: Ketol-acid reductoisomerase (NADP(+)) (341 aa).

Positions 2-181 (AKVYYNGDAN…GAARAGVLET (180 aa)) constitute a KARI N-terminal Rossmann domain. NADP(+) is bound by residues 25–28 (YGSQ), Arg-48, Ser-52, and 82–85 (DEKQ). His-107 is an active-site residue. Gly-133 serves as a coordination point for NADP(+). The region spanning 182–327 (TFKEETETDL…RELRSMMPFV (146 aa)) is the KARI C-terminal knotted domain. Positions 190, 194, 226, and 230 each coordinate Mg(2+). A substrate-binding site is contributed by Ser-251.

This sequence belongs to the ketol-acid reductoisomerase family. Mg(2+) serves as cofactor.

It carries out the reaction (2R)-2,3-dihydroxy-3-methylbutanoate + NADP(+) = (2S)-2-acetolactate + NADPH + H(+). It catalyses the reaction (2R,3R)-2,3-dihydroxy-3-methylpentanoate + NADP(+) = (S)-2-ethyl-2-hydroxy-3-oxobutanoate + NADPH + H(+). Its pathway is amino-acid biosynthesis; L-isoleucine biosynthesis; L-isoleucine from 2-oxobutanoate: step 2/4. It functions in the pathway amino-acid biosynthesis; L-valine biosynthesis; L-valine from pyruvate: step 2/4. Its function is as follows. Involved in the biosynthesis of branched-chain amino acids (BCAA). Catalyzes an alkyl-migration followed by a ketol-acid reduction of (S)-2-acetolactate (S2AL) to yield (R)-2,3-dihydroxy-isovalerate. In the isomerase reaction, S2AL is rearranged via a Mg-dependent methyl migration to produce 3-hydroxy-3-methyl-2-ketobutyrate (HMKB). In the reductase reaction, this 2-ketoacid undergoes a metal-dependent reduction by NADPH to yield (R)-2,3-dihydroxy-isovalerate. This is Ketol-acid reductoisomerase (NADP(+)) from Geobacillus thermodenitrificans (strain NG80-2).